The chain runs to 287 residues: NAD kinase (287 aa).

Residue Asp-56 is the Proton acceptor of the active site. NAD(+) contacts are provided by residues 56–57 (DG), Arg-61, 128–129 (ND), and Asp-156.

It belongs to the NAD kinase family. The cofactor is a divalent metal cation.

The protein localises to the cytoplasm. It catalyses the reaction NAD(+) + ATP = ADP + NADP(+) + H(+). Functionally, involved in the regulation of the intracellular balance of NAD and NADP, and is a key enzyme in the biosynthesis of NADP. Catalyzes specifically the phosphorylation on 2'-hydroxyl of the adenosine moiety of NAD to yield NADP. In Thermomicrobium roseum (strain ATCC 27502 / DSM 5159 / P-2), this protein is NAD kinase.